An 811-amino-acid polypeptide reads, in one-letter code: MLALRSFFYLLLKFPLKLLVRCKIITDSQNITDQPNQPIFYIVRHQSASDLLALQSACKKQNLPDPLGKVTINGESFNRTLCLAKSTPLCSWRKSSKTTATAQGLALLNQHVIDENIDAKLIPANLIWGRTPTKERKNLNIGTLLADQESPNWLRKFFIVLFLGRDTLVRFSEAFSLRNISDNHGSDEAAAHKFLRVARFHFHRQTIAAKGPRLMHRKQMFTALFANPSVKRIISDEAKNKKVSEAEIKKKALVMMNEIAGDYSVSWLRFGEIILHWLWKRLYSAIKVSNAKVLRKLAQDGHEIIYVPCHRSHMDYLLLSYVILQEGLVMPRIAAGINLNFWPAGTIFRKGGAFFIRRSFGGNRLYSTIFREYLGLLFERGYGVKYYTEGGRSRTGRVLAPKTGMLAMTIQSLLRGIDRPLTLVPVYLGYEHVMEVGTYHKELSGSEKKGESMFGVLKAIKSLRNYGNGYVNFGEPMNINEFLNKQVPDWKDSIDPIDPQKPSWLTPTVNVLADQVMENINKSAALNGVALIALILHASKNKALSKLELETQLDFFLNIQRQAPFSEQLTIPEETGAELLTHVISLNKVTITEDSFGSLVSLSETANTEMRYYRNNILHTYVVPALVCRLLDKHSKINQDELVIKVQNVTALLKEDLYLYQDSTHVEQQTLRVLTVLKEMEIAKQTKAGFWSLSDDVGLLSQVHAMAECIDESLQRLAIITSLTSRLAPLSKRDLETKVVAIAKRLSVLNNINAPEFIDKRAQSTLIATIREQGYIDLDDDGLLIASSTMAEIKATVINLVDIEVLQSIAR.

The short motif at 309 to 314 is the HXXXXD motif element; the sequence is CHRSHM.

This sequence belongs to the GPAT/DAPAT family.

The protein localises to the cell inner membrane. It catalyses the reaction sn-glycerol 3-phosphate + an acyl-CoA = a 1-acyl-sn-glycero-3-phosphate + CoA. It participates in phospholipid metabolism; CDP-diacylglycerol biosynthesis; CDP-diacylglycerol from sn-glycerol 3-phosphate: step 1/3. The sequence is that of Glycerol-3-phosphate acyltransferase from Colwellia psychrerythraea (strain 34H / ATCC BAA-681) (Vibrio psychroerythus).